The chain runs to 235 residues: Zorya protein ZorB (235 aa).

Residues 25-44 form a helical membrane-spanning segment; it reads LMAGLMMVFMFISIAYMHYV. One can recognise an OmpA-like domain in the interval 87-225; that stretch reads QTLEVRFKSP…RVTFKVVTNA (139 aa).

This sequence belongs to the MotB family.

The protein resides in the cell inner membrane. Component of antiviral defense system Zorya type II, composed of ZorA, ZorB and ZorE. Expression of Zorya type II in E.coli (strain MG1655) confers resistance to phages SECphi7 and T7. While most T7 infected Zorya-containing cells undergo abortive infection, a minority produce viable phage progeny. These eventually accumulate to a high multiplicity of infection, leading to culture collapse by 170 minutes after initial infection. ZorA and ZorB probably assemble in the cell inner membrane and exert their effect there. This chain is Zorya protein ZorB, found in Escherichia coli (strain ATCC 8739 / DSM 1576 / NBRC 3972 / NCIMB 8545 / WDCM 00012 / Crooks).